The sequence spans 596 residues: Myosin light chain kinase 2, skeletal/cardiac muscle (596 aa).

A disordered region spans residues Met1–Thr224. Position 2 is an N-acetylalanine (Ala2). A compositionally biased stretch (basic and acidic residues) spans Asp40–Asp63. Low complexity predominate over residues Glu88–Pro104. Phosphoserine occurs at positions 143, 149, and 151. Over residues Arg189 to Glu209 the composition is skewed to basic and acidic residues. In terms of domain architecture, Protein kinase spans Met285–Leu540. ATP is bound by residues Leu291–Val299 and Lys314. Asp406 acts as the Proton acceptor in catalysis. A Phosphothreonine modification is found at Thr445. The segment at Ile574 to Ser586 is calmodulin-binding.

The protein belongs to the protein kinase superfamily. CAMK Ser/Thr protein kinase family. As to quaternary structure, may interact with centrin. As to expression, heart and skeletal muscles. Increased expression in the apical tissue compared to the interventricular septal tissue.

The protein resides in the cytoplasm. It carries out the reaction L-seryl-[myosin light chain] + ATP = O-phospho-L-seryl-[myosin light chain] + ADP + H(+). The catalysed reaction is L-threonyl-[myosin light chain] + ATP = O-phospho-L-threonyl-[myosin light chain] + ADP + H(+). Functionally, implicated in the level of global muscle contraction and cardiac function. Phosphorylates a specific serine in the N-terminus of a myosin light chain. This chain is Myosin light chain kinase 2, skeletal/cardiac muscle (MYLK2), found in Homo sapiens (Human).